The primary structure comprises 101 residues: Large ribosomal subunit protein uL24 (101 aa).

It belongs to the universal ribosomal protein uL24 family. As to quaternary structure, part of the 50S ribosomal subunit.

Functionally, one of two assembly initiator proteins, it binds directly to the 5'-end of the 23S rRNA, where it nucleates assembly of the 50S subunit. In terms of biological role, one of the proteins that surrounds the polypeptide exit tunnel on the outside of the subunit. In Streptococcus uberis (strain ATCC BAA-854 / 0140J), this protein is Large ribosomal subunit protein uL24.